The sequence spans 307 residues: UDP-N-acetylenolpyruvoylglucosamine reductase (307 aa).

One can recognise an FAD-binding PCMH-type domain in the interval 27–193; the sequence is RVGGPADVVF…LDAVFEGLAD (167 aa). Residue arginine 172 is part of the active site. The Proton donor role is filled by serine 222. Glutamate 299 is a catalytic residue.

Belongs to the MurB family. Requires FAD as cofactor.

The protein localises to the cytoplasm. It carries out the reaction UDP-N-acetyl-alpha-D-muramate + NADP(+) = UDP-N-acetyl-3-O-(1-carboxyvinyl)-alpha-D-glucosamine + NADPH + H(+). It functions in the pathway cell wall biogenesis; peptidoglycan biosynthesis. In terms of biological role, cell wall formation. The chain is UDP-N-acetylenolpyruvoylglucosamine reductase from Caulobacter sp. (strain K31).